The following is a 58-amino-acid chain: Large ribosomal subunit protein bL32 (58 aa).

A compositionally biased stretch (basic residues) spans 1 to 19 (MAVPKRKTSKSNTKMRRAA). The segment at 1–22 (MAVPKRKTSKSNTKMRRAANSK) is disordered.

This sequence belongs to the bacterial ribosomal protein bL32 family.

The sequence is that of Large ribosomal subunit protein bL32 from Clostridioides difficile (strain 630) (Peptoclostridium difficile).